Consider the following 484-residue polypeptide: UDP-N-acetylmuramate--L-alanine ligase (484 aa).

124 to 130 (GTHGKTT) is an ATP binding site.

It belongs to the MurCDEF family.

It is found in the cytoplasm. The enzyme catalyses UDP-N-acetyl-alpha-D-muramate + L-alanine + ATP = UDP-N-acetyl-alpha-D-muramoyl-L-alanine + ADP + phosphate + H(+). Its pathway is cell wall biogenesis; peptidoglycan biosynthesis. In terms of biological role, cell wall formation. In Pseudoalteromonas atlantica (strain T6c / ATCC BAA-1087), this protein is UDP-N-acetylmuramate--L-alanine ligase.